A 446-amino-acid polypeptide reads, in one-letter code: Tubulin beta-6 chain (446 aa).

The MREI motif motif lies at 1 to 4 (MREI). Q11, E69, S138, G142, T143, and G144 together coordinate GTP. E69 contacts Mg(2+). S172 carries the phosphoserine; by CDK1 modification. GTP is bound by residues N204 and N226. E438 carries the 5-glutamyl polyglutamate modification.

It belongs to the tubulin family. As to quaternary structure, dimer of alpha and beta chains. A typical microtubule is a hollow water-filled tube with an outer diameter of 25 nm and an inner diameter of 15 nM. Alpha-beta heterodimers associate head-to-tail to form protofilaments running lengthwise along the microtubule wall with the beta-tubulin subunit facing the microtubule plus end conferring a structural polarity. Microtubules usually have 13 protofilaments but different protofilament numbers can be found in some organisms and specialized cells. The cofactor is Mg(2+). Post-translationally, some glutamate residues at the C-terminus are polyglutamylated, resulting in polyglutamate chains on the gamma-carboxyl group. Polyglutamylation plays a key role in microtubule severing by spastin (SPAST). SPAST preferentially recognizes and acts on microtubules decorated with short polyglutamate tails: severing activity by SPAST increases as the number of glutamates per tubulin rises from one to eight, but decreases beyond this glutamylation threshold. Glutamylation is also involved in cilia motility. In terms of processing, some glutamate residues at the C-terminus are monoglycylated but not polyglycylated due to the absence of functional TTLL10 in human. Monoglycylation is mainly limited to tubulin incorporated into cilia and flagella axonemes, which is required for their stability and maintenance. Flagella glycylation controls sperm motility. Both polyglutamylation and monoglycylation can coexist on the same protein on adjacent residues, and lowering glycylation levels increases polyglutamylation, and reciprocally. Phosphorylated on Ser-172 by CDK1 during the cell cycle, from metaphase to telophase, but not in interphase. This phosphorylation inhibits tubulin incorporation into microtubules. As to expression, ubiquitous. Maximal expression in breast and lung, where it represents around 10% of all beta-tubulins. Largely decreased expression in most cancerous tissues.

It is found in the cytoplasm. Its subcellular location is the cytoskeleton. Tubulin is the major constituent of microtubules, a cylinder consisting of laterally associated linear protofilaments composed of alpha- and beta-tubulin heterodimers. Microtubules grow by the addition of GTP-tubulin dimers to the microtubule end, where a stabilizing cap forms. Below the cap, tubulin dimers are in GDP-bound state, owing to GTPase activity of alpha-tubulin. The protein is Tubulin beta-6 chain (TUBB6) of Homo sapiens (Human).